Consider the following 477-residue polypeptide: MSMRIGNETFKQAVKTELKDDFMRGAVSSAQDRLRERKLKTQEDLGNWEEWRDHSEEIRQHTLANLDYYLNMLSENVAAKGGHVFFAETAEEANQYVQKVLRDKNAKKVAKSKSMVTEEIGLNEAMEAVGCEVIETDLGEYILQVDDHNPPSHIVVPALHLNKEQIEKVFKEKLGYDKSSQPEELALFARQKLREEFLSADVGVTGCNFGVAESGSFSLVTNEGNARMVTTLPKTQITVMGMERLVPTHEELEVLVSMLTRSAVGQKLTSYVTTLTGPRAEDEIDGPEEFHLIIVDNGRSKILGTQFQSILQCIRCAACVNVCPVYRQTGGHSYGSIYPGPIGAVLSPLLGGYDTYKELPYASTLCGACTEACPVKIPLHDLLLEHRRVIVEEEHMSPVAERLVMKGFAQGASHSTLFKYGTKAAPALMSPFENKDKGMITKGPKPLQAWTNSRDFPMPDDENFRDWMQNRLKRGAK.

4Fe-4S ferredoxin-type domains lie at 304–334 and 353–382; these read GTQFQSILQCIRCAACVNVCPVYRQTGGHSY and YDTYKELPYASTLCGACTEACPVKIPLHDL. Residues C313, C316, C319, C323, C366, C369, and C373 each contribute to the [4Fe-4S] cluster site. A disordered region spans residues 443–463; that stretch reads GPKPLQAWTNSRDFPMPDDEN.

Belongs to the LutB/YkgF family.

In terms of biological role, is involved in L-lactate degradation and allows cells to grow with lactate as the sole carbon source. Has probably a role as an electron transporter during oxidation of L-lactate. This is Lactate utilization protein B from Macrococcus caseolyticus (strain JCSC5402) (Macrococcoides caseolyticum).